Reading from the N-terminus, the 372-residue chain is Proline-rich P65 protein homolog (372 aa).

A compositionally biased stretch (low complexity) spans 1-37; the sequence is MEKNRSAFQQNQQASNQPFNQDQNQYYQDPNQQQFNQ. The segment at 1–100 is disordered; the sequence is MEKNRSAFQQ…GFDPNQQYYQ (100 aa). Repeat copies occupy residues 29–40, 41–52, 53–60, 61–72, 73–80, 81–92, 93–100, 101–112, 113–119, 120–131, 132–138, 139–150, and 151–162. Polar residues predominate over residues 38-49; sequence SGFDPNQQQFNQ. The span at 53–100 shows a compositional bias: low complexity; that stretch reads DPNQQYYQDPNQQQFNQAGFDQNQQYYQDPNQQQFNQPGFDPNQQYYQ. The interval 122-150 is disordered; it reads NQQQFNQSGFDQNQYYQDPNQQQFNQPSF.

In Mycoplasma genitalium (strain ATCC 33530 / DSM 19775 / NCTC 10195 / G37) (Mycoplasmoides genitalium), this protein is Proline-rich P65 protein homolog.